The sequence spans 227 residues: tRNA (guanine-N(7)-)-methyltransferase (227 aa).

The tract at residues 1–21 is disordered; the sequence is MPDMTMKSQPDRLYGRQRGHA. 4 residues coordinate S-adenosyl-L-methionine: E54, E79, D114, and D136. Residue D136 is part of the active site. Substrate-binding positions include K140, D172, and 206–209; that span reads TRYE.

The protein belongs to the class I-like SAM-binding methyltransferase superfamily. TrmB family.

The catalysed reaction is guanosine(46) in tRNA + S-adenosyl-L-methionine = N(7)-methylguanosine(46) in tRNA + S-adenosyl-L-homocysteine. The protein operates within tRNA modification; N(7)-methylguanine-tRNA biosynthesis. In terms of biological role, catalyzes the formation of N(7)-methylguanine at position 46 (m7G46) in tRNA. This Granulibacter bethesdensis (strain ATCC BAA-1260 / CGDNIH1) protein is tRNA (guanine-N(7)-)-methyltransferase.